The sequence spans 178 residues: MAEDQAPREETVEAPELTEAPEIDELETLRAERDELRDRFMRALADAENSRKRADRDRREAEQYGGTRLARDLLPVYDNLSRALEVATDEQRAAAAALIEGVELTLRELRNVMNKHGVRPITPQVGDTFDPQQHQAMFEAPVPGTKAGQIIQVMTEGFMIHDRLLRPAQVGVSSNTGA.

Residues 1–11 (MAEDQAPREET) are compositionally biased toward basic and acidic residues. Residues 1-30 (MAEDQAPREETVEAPELTEAPEIDELETLR) are disordered.

The protein belongs to the GrpE family. As to quaternary structure, homodimer.

It is found in the cytoplasm. Its function is as follows. Participates actively in the response to hyperosmotic and heat shock by preventing the aggregation of stress-denatured proteins, in association with DnaK and GrpE. It is the nucleotide exchange factor for DnaK and may function as a thermosensor. Unfolded proteins bind initially to DnaJ; upon interaction with the DnaJ-bound protein, DnaK hydrolyzes its bound ATP, resulting in the formation of a stable complex. GrpE releases ADP from DnaK; ATP binding to DnaK triggers the release of the substrate protein, thus completing the reaction cycle. Several rounds of ATP-dependent interactions between DnaJ, DnaK and GrpE are required for fully efficient folding. The protein is Protein GrpE of Cereibacter sphaeroides (strain ATCC 17023 / DSM 158 / JCM 6121 / CCUG 31486 / LMG 2827 / NBRC 12203 / NCIMB 8253 / ATH 2.4.1.) (Rhodobacter sphaeroides).